A 374-amino-acid polypeptide reads, in one-letter code: MVYSRQKAGMSETGSSFSGAEPFTLAVDGMGGDGGPEVVVAGLAIAADRHPGARVLLIGDEATLRQELARHPKAAAICTIRPANSAIPMDMKPTAALRVRDSSMRLSMDAVAQGEAQGVVSAGNSGAMLALAKIVVKTLPGVSRPAMAAISPTLKGDVVMLDLGANVACDWRNLVEFAVMGEAFAKAVLGLPAPTIGLLNVGSEELKGDEKLRQAADVLRNSSLAAQFHGFVEGHDITAGTTDVVVTDGFTGNVALKTGEGALKMAFVLLRQVFRSGLLAKLGYLLVRPGLERMREWLDPRRYNGAVFVGLNGVVVKSHGGTDAEGFASAVDVAMDMVTHRFNESIREQLSRLDTLAAMRSGAEKEHPAVAAVS.

It belongs to the PlsX family. In terms of assembly, homodimer. Probably interacts with PlsY.

The protein resides in the cytoplasm. It catalyses the reaction a fatty acyl-[ACP] + phosphate = an acyl phosphate + holo-[ACP]. Its pathway is lipid metabolism; phospholipid metabolism. In terms of biological role, catalyzes the reversible formation of acyl-phosphate (acyl-PO(4)) from acyl-[acyl-carrier-protein] (acyl-ACP). This enzyme utilizes acyl-ACP as fatty acyl donor, but not acyl-CoA. The protein is Phosphate acyltransferase of Gluconacetobacter diazotrophicus (strain ATCC 49037 / DSM 5601 / CCUG 37298 / CIP 103539 / LMG 7603 / PAl5).